The following is a 936-amino-acid chain: Isoleucine--tRNA ligase (936 aa).

A 'HIGH' region motif is present at residues 58-68 (PYANGRAHLGT). L-isoleucyl-5'-AMP is bound at residue Glu561. Positions 602–606 (KMSKS) match the 'KMSKS' region motif. ATP is bound at residue Lys605. The Zn(2+) site is built by Cys899, Cys902, Cys919, and Cys922.

It belongs to the class-I aminoacyl-tRNA synthetase family. IleS type 1 subfamily. As to quaternary structure, monomer. The cofactor is Zn(2+).

Its subcellular location is the cytoplasm. It carries out the reaction tRNA(Ile) + L-isoleucine + ATP = L-isoleucyl-tRNA(Ile) + AMP + diphosphate. Its function is as follows. Catalyzes the attachment of isoleucine to tRNA(Ile). As IleRS can inadvertently accommodate and process structurally similar amino acids such as valine, to avoid such errors it has two additional distinct tRNA(Ile)-dependent editing activities. One activity is designated as 'pretransfer' editing and involves the hydrolysis of activated Val-AMP. The other activity is designated 'posttransfer' editing and involves deacylation of mischarged Val-tRNA(Ile). This chain is Isoleucine--tRNA ligase, found in Coxiella burnetii (strain CbuG_Q212) (Coxiella burnetii (strain Q212)).